Reading from the N-terminus, the 290-residue chain is Fructose-1,6-bisphosphatase class 1 (290 aa).

Mg(2+) contacts are provided by Glu-78, Asp-96, Leu-98, and Asp-99. Substrate contacts are provided by residues 99-102 (DGSS), Tyr-201, and Lys-226. Glu-232 is a binding site for Mg(2+).

Belongs to the FBPase class 1 family. In terms of assembly, homotetramer. It depends on Mg(2+) as a cofactor.

It localises to the cytoplasm. The enzyme catalyses beta-D-fructose 1,6-bisphosphate + H2O = beta-D-fructose 6-phosphate + phosphate. Its pathway is carbohydrate biosynthesis; gluconeogenesis. The protein is Fructose-1,6-bisphosphatase class 1 of Helicobacter pylori (strain Shi470).